We begin with the raw amino-acid sequence, 150 residues long: Ribosome maturation factor RimP (150 aa).

This sequence belongs to the RimP family.

It localises to the cytoplasm. Its function is as follows. Required for maturation of 30S ribosomal subunits. The chain is Ribosome maturation factor RimP from Acaryochloris marina (strain MBIC 11017).